Consider the following 660-residue polypeptide: Bifunctional polymyxin resistance protein ArnA (660 aa).

The formyltransferase ArnAFT stretch occupies residues 1-304; the sequence is MKTVVFAYHD…TLGLVQGSRL (304 aa). Position 86–88 (86–88) interacts with (6R)-10-formyltetrahydrofolate; sequence HLI. The active-site Proton donor; for formyltransferase activity is histidine 104. (6R)-10-formyltetrahydrofolate-binding positions include arginine 114 and 136–140; that span reads VKRAD. The segment at 314 to 660 is dehydrogenase ArnADH; the sequence is RRTRVLILGV…RTVDLTDKPS (347 aa). NAD(+) contacts are provided by residues aspartate 347 and 368 to 369; that span reads DI. UDP-alpha-D-glucuronate-binding positions include alanine 393, tyrosine 398, and 432–433; that span reads TS. Residue glutamate 434 is the Proton acceptor; for decarboxylase activity of the active site. Residues arginine 460, asparagine 492, 526 to 535, and tyrosine 613 each bind UDP-alpha-D-glucuronate; that span reads KLIDGGKQKR. The Proton donor; for decarboxylase activity role is filled by arginine 619.

In the N-terminal section; belongs to the Fmt family. UDP-L-Ara4N formyltransferase subfamily. It in the C-terminal section; belongs to the NAD(P)-dependent epimerase/dehydratase family. UDP-glucuronic acid decarboxylase subfamily. In terms of assembly, homohexamer, formed by a dimer of trimers.

The catalysed reaction is UDP-alpha-D-glucuronate + NAD(+) = UDP-beta-L-threo-pentopyranos-4-ulose + CO2 + NADH. The enzyme catalyses UDP-4-amino-4-deoxy-beta-L-arabinose + (6R)-10-formyltetrahydrofolate = UDP-4-deoxy-4-formamido-beta-L-arabinose + (6S)-5,6,7,8-tetrahydrofolate + H(+). The protein operates within nucleotide-sugar biosynthesis; UDP-4-deoxy-4-formamido-beta-L-arabinose biosynthesis; UDP-4-deoxy-4-formamido-beta-L-arabinose from UDP-alpha-D-glucuronate: step 1/3. Its pathway is nucleotide-sugar biosynthesis; UDP-4-deoxy-4-formamido-beta-L-arabinose biosynthesis; UDP-4-deoxy-4-formamido-beta-L-arabinose from UDP-alpha-D-glucuronate: step 3/3. It functions in the pathway bacterial outer membrane biogenesis; lipopolysaccharide biosynthesis. In terms of biological role, bifunctional enzyme that catalyzes the oxidative decarboxylation of UDP-glucuronic acid (UDP-GlcUA) to UDP-4-keto-arabinose (UDP-Ara4O) and the addition of a formyl group to UDP-4-amino-4-deoxy-L-arabinose (UDP-L-Ara4N) to form UDP-L-4-formamido-arabinose (UDP-L-Ara4FN). The modified arabinose is attached to lipid A and is required for resistance to polymyxin and cationic antimicrobial peptides. The sequence is that of Bifunctional polymyxin resistance protein ArnA from Escherichia coli O81 (strain ED1a).